An 831-amino-acid polypeptide reads, in one-letter code: Probable beta-glucosidase H (831 aa).

Residue Asn13 is glycosylated (N-linked (GlcNAc...) asparagine). Residue Asp225 is part of the active site. One can recognise a PA14 domain in the interval 389 to 549; the sequence is RLLSNAVIHF…DAEEMINRAV (161 aa). 6 N-linked (GlcNAc...) asparagine glycosylation sites follow: Asn474, Asn514, Asn604, Asn629, Asn726, and Asn823.

It belongs to the glycosyl hydrolase 3 family.

It localises to the secreted. It carries out the reaction Hydrolysis of terminal, non-reducing beta-D-glucosyl residues with release of beta-D-glucose.. It participates in glycan metabolism; cellulose degradation. Beta-glucosidases are one of a number of cellulolytic enzymes involved in the degradation of cellulosic biomass. Catalyzes the last step releasing glucose from the inhibitory cellobiose. In Emericella nidulans (strain FGSC A4 / ATCC 38163 / CBS 112.46 / NRRL 194 / M139) (Aspergillus nidulans), this protein is Probable beta-glucosidase H (bglH).